The following is a 424-amino-acid chain: Tyrosine--tRNA ligase (424 aa).

Y36 is a binding site for L-tyrosine. Positions 41–50 (PTAPSLHAGH) match the 'HIGH' region motif. Residues Y171 and Q175 each contribute to the L-tyrosine site. The 'KMSKS' region motif lies at 231–235 (KFGKS). Residue K234 coordinates ATP. The region spanning 356-413 (DGIVDLLVASGLSASKGAARRTIHEGGVSVNNIRVDNEEWVPQSSDFLHGRWLVLRRG) is the S4 RNA-binding domain.

It belongs to the class-I aminoacyl-tRNA synthetase family. TyrS type 1 subfamily. As to quaternary structure, homodimer.

It localises to the cytoplasm. It catalyses the reaction tRNA(Tyr) + L-tyrosine + ATP = L-tyrosyl-tRNA(Tyr) + AMP + diphosphate + H(+). Catalyzes the attachment of tyrosine to tRNA(Tyr) in a two-step reaction: tyrosine is first activated by ATP to form Tyr-AMP and then transferred to the acceptor end of tRNA(Tyr). This is Tyrosine--tRNA ligase from Mycobacterium bovis (strain ATCC BAA-935 / AF2122/97).